Consider the following 143-residue polypeptide: Transcriptional regulator MraZ (143 aa).

2 SpoVT-AbrB domains span residues 5-47 (EFLH…PMDE) and 76-119 (AIEC…ANDA).

It belongs to the MraZ family. In terms of assembly, forms oligomers.

It is found in the cytoplasm. It localises to the nucleoid. This is Transcriptional regulator MraZ from Oceanobacillus iheyensis (strain DSM 14371 / CIP 107618 / JCM 11309 / KCTC 3954 / HTE831).